The sequence spans 101 residues: RNA-binding protein Hfq (101 aa).

The region spanning 9–68 is the Sm domain; the sequence is DPFLNALRRERVPVSIYLVNGIKLQGQVESFDQFVILLKNTVSQMVYKHAISTVVPSPPV. The disordered stretch occupies residues 62 to 101; the sequence is VVPSPPVSHHSNTPSGSTNNYHGSNPSAPQQPQQDSDDAE. Residues 70-86 show a composition bias toward polar residues; sequence HHSNTPSGSTNNYHGSN.

Belongs to the Hfq family. Homohexamer.

Its function is as follows. RNA chaperone that binds small regulatory RNA (sRNAs) and mRNAs to facilitate mRNA translational regulation in response to envelope stress, environmental stress and changes in metabolite concentrations. Also binds with high specificity to tRNAs. This is RNA-binding protein Hfq from Yersinia pestis (strain Pestoides F).